The chain runs to 397 residues: Succinyl-diaminopimelate desuccinylase (397 aa).

Residue H73 coordinates Zn(2+). The active site involves D75. Zn(2+) is bound at residue D106. Catalysis depends on E140, which acts as the Proton acceptor. Residues E141, E169, and H366 each contribute to the Zn(2+) site.

The protein belongs to the peptidase M20A family. DapE subfamily. In terms of assembly, homodimer. Zn(2+) serves as cofactor. It depends on Co(2+) as a cofactor.

It catalyses the reaction N-succinyl-(2S,6S)-2,6-diaminopimelate + H2O = (2S,6S)-2,6-diaminopimelate + succinate. Its pathway is amino-acid biosynthesis; L-lysine biosynthesis via DAP pathway; LL-2,6-diaminopimelate from (S)-tetrahydrodipicolinate (succinylase route): step 3/3. Catalyzes the hydrolysis of N-succinyl-L,L-diaminopimelic acid (SDAP), forming succinate and LL-2,6-diaminopimelate (DAP), an intermediate involved in the bacterial biosynthesis of lysine and meso-diaminopimelic acid, an essential component of bacterial cell walls. In Rhizobium johnstonii (strain DSM 114642 / LMG 32736 / 3841) (Rhizobium leguminosarum bv. viciae), this protein is Succinyl-diaminopimelate desuccinylase.